The sequence spans 1025 residues: Multidrug resistance protein MdtC (1025 aa).

The next 12 helical transmembrane spans lie at 3–23, 333–353, 360–380, 387–407, 431–451, 463–483, 528–548, 853–873, 875–895, 897–917, 953–973, and 984–1004; these read FFALFIYRPVATILLSVAITL, EVEQTLIISVALVILVVFLFL, IIPAVVVPVSLIGTFAAMYLC, LSLMALTIATGFVVDDAIVVL, VGFTVLSMSLSLVAVFLPLLL, FAVTLSVAIGISLLVSLTLTP, LVGVVLLGTIALNIWLYISIP, VILIIAAIATVYIVLGILYES, VHPLTILSTLPSAGVGALLAL, LFNAPFSLIALIGIMLLIGIV, PIMMTTLAALFGALPLVLSGG, and ITIVGGLVMSQLLTLYTTPVV.

This sequence belongs to the resistance-nodulation-cell division (RND) (TC 2.A.6) family. MdtC subfamily. As to quaternary structure, part of a tripartite efflux system composed of MdtA, MdtB and MdtC. MdtC forms a heteromultimer with MdtB.

It is found in the cell inner membrane. Its function is as follows. The MdtABC tripartite complex confers resistance against novobiocin and deoxycholate. The polypeptide is Multidrug resistance protein MdtC (Escherichia coli O8 (strain IAI1)).